The following is a 1059-amino-acid chain: WD repeat-containing protein on Y chromosome (1059 aa).

WD repeat units lie at residues 121-161, 170-209, 214-256, 344-383, 387-426, 476-515, 528-567, 616-658, 714-759, 766-805, and 849-888; these read DFCP…ALTA, RSKTWVLDTVPLPDLSMFCVTGLETELRLYNVVAACFTLK, RLPQ…KVTT, CVPRGVTCFAFEPSNELLVSGGPDCDLRLWDIHRPEKPSV, GHTSSITFLFLQDAGEKIYSLDQRKIIKVWDVRNRVLLQT, SHTKPVSVLLYNGLYRLVVSCGFDSFIIVWDHRVNRKMTI, LEPVEITAACFDGKEQMLLTGARNGSLKIWNIGGRTCMRT, QHSD…RRYD, MRQL…GFKG, MAGDRIITLATDKANRFLFTGTALGYVKTWYIENCWIPNE, and AHRACVTGLTYLDDTGLLLSCSSDRTVRLWTLGGRYIGLL.

The chain is WD repeat-containing protein on Y chromosome from Anopheles gambiae (African malaria mosquito).